The following is a 363-amino-acid chain: tRNA N6-adenosine threonylcarbamoyltransferase (363 aa).

Residues His121 and His125 each coordinate Fe cation. Residues 143–147 (LASGG), Asp176, Gly189, and Asn287 contribute to the substrate site. Asp315 lines the Fe cation pocket.

It belongs to the KAE1 / TsaD family. Requires Fe(2+) as cofactor.

It is found in the cytoplasm. The catalysed reaction is L-threonylcarbamoyladenylate + adenosine(37) in tRNA = N(6)-L-threonylcarbamoyladenosine(37) in tRNA + AMP + H(+). Required for the formation of a threonylcarbamoyl group on adenosine at position 37 (t(6)A37) in tRNAs that read codons beginning with adenine. Is involved in the transfer of the threonylcarbamoyl moiety of threonylcarbamoyl-AMP (TC-AMP) to the N6 group of A37, together with TsaE and TsaB. TsaD likely plays a direct catalytic role in this reaction. In Rhodopseudomonas palustris (strain BisB5), this protein is tRNA N6-adenosine threonylcarbamoyltransferase.